Consider the following 177-residue polypeptide: Large ribosomal subunit protein uL6 (177 aa).

It belongs to the universal ribosomal protein uL6 family. In terms of assembly, part of the 50S ribosomal subunit.

In terms of biological role, this protein binds to the 23S rRNA, and is important in its secondary structure. It is located near the subunit interface in the base of the L7/L12 stalk, and near the tRNA binding site of the peptidyltransferase center. This chain is Large ribosomal subunit protein uL6, found in Brucella anthropi (strain ATCC 49188 / DSM 6882 / CCUG 24695 / JCM 21032 / LMG 3331 / NBRC 15819 / NCTC 12168 / Alc 37) (Ochrobactrum anthropi).